Consider the following 279-residue polypeptide: 3-methyl-2-oxobutanoate hydroxymethyltransferase (279 aa).

Residues D44 and D83 each contribute to the Mg(2+) site. Residues 44–45 (DS), D83, and K113 contribute to the 3-methyl-2-oxobutanoate site. E115 is a binding site for Mg(2+). E182 (proton acceptor) is an active-site residue.

It belongs to the PanB family. Homodecamer; pentamer of dimers. It depends on Mg(2+) as a cofactor.

The protein resides in the cytoplasm. It carries out the reaction 3-methyl-2-oxobutanoate + (6R)-5,10-methylene-5,6,7,8-tetrahydrofolate + H2O = 2-dehydropantoate + (6S)-5,6,7,8-tetrahydrofolate. Its pathway is cofactor biosynthesis; (R)-pantothenate biosynthesis; (R)-pantoate from 3-methyl-2-oxobutanoate: step 1/2. Functionally, catalyzes the reversible reaction in which hydroxymethyl group from 5,10-methylenetetrahydrofolate is transferred onto alpha-ketoisovalerate to form ketopantoate. This chain is 3-methyl-2-oxobutanoate hydroxymethyltransferase, found in Dehalococcoides mccartyi (strain CBDB1).